The following is a 414-amino-acid chain: Esterase FrsA (414 aa).

It belongs to the FrsA family.

The catalysed reaction is a carboxylic ester + H2O = an alcohol + a carboxylate + H(+). Catalyzes the hydrolysis of esters. The protein is Esterase FrsA of Escherichia coli O127:H6 (strain E2348/69 / EPEC).